A 679-amino-acid polypeptide reads, in one-letter code: Methionine--tRNA ligase (679 aa).

The 'HIGH' region motif lies at 12 to 22 (PYANGPIHIGH). 4 residues coordinate Zn(2+): Cys143, Cys146, Cys156, and Cys158. The short motif at 328–332 (KMSKS) is the 'KMSKS' region element. Lys331 serves as a coordination point for ATP. The interval 537–564 (MMEESKDEAAQETGAAATNPFNDSDQPL) is disordered. One can recognise a tRNA-binding domain in the interval 577–679 (DFMKVDLRVA…EGALPGQRVH (103 aa)).

Belongs to the class-I aminoacyl-tRNA synthetase family. MetG type 1 subfamily. Homodimer. It depends on Zn(2+) as a cofactor.

The protein resides in the cytoplasm. The enzyme catalyses tRNA(Met) + L-methionine + ATP = L-methionyl-tRNA(Met) + AMP + diphosphate. Its function is as follows. Is required not only for elongation of protein synthesis but also for the initiation of all mRNA translation through initiator tRNA(fMet) aminoacylation. The sequence is that of Methionine--tRNA ligase from Rhodopirellula baltica (strain DSM 10527 / NCIMB 13988 / SH1).